Consider the following 531-residue polypeptide: Cytochrome P450 monooxygenase peniB (531 aa).

A helical membrane pass occupies residues 30 to 48 (ILSIAAVVFLGYLLLRPLF). Residue C445 coordinates heme.

Belongs to the cytochrome P450 family. Heme is required as a cofactor.

The protein resides in the membrane. The catalysed reaction is silphinene-15-oate + 2 reduced [NADPH--hemoprotein reductase] + 2 O2 = gamma-lactone-2-keto[5.5.5.5]fenestrane + 2 oxidized [NADPH--hemoprotein reductase] + 3 H2O + H(+). The protein operates within secondary metabolite biosynthesis; terpenoid biosynthesis. In terms of biological role, cytochrome P450 monooxygenase; part of the gene cluster that mediates the biosynthesis of penifulvin A, a potent insecticidal sesquiterpene that features a [5.5.5.6]dioxafenestrane ring. Within the pathway, peniB catalyzes the multi-step oxidation of silphinene to synthesize gamma-lactone-2-keto[5.5.5.5]fenestrane, including oxidation of the C15 methylgroup in silphinene to form silphinene-15-oic acid, activationof the C1-C2 double bond to form the gamma-lactone-2-hydroxy[5.5.5.5]fenestrane, and dehydrogenation of the hydroxy group at C2 of gamma-lactone-2-hydroxy[5.5.5.5]fenestrane to generate gamma-lactone-2-keto[5.5.5.5]fenestrane. The first step of the pathway is performed by the sesquiterpene cyclase peniA that generates the angular triquinane scaffold silphinene via cyclization of the linear farnesyl pyrophosphate (FPP). The cytochrome P450 monooxygenase peniB and the flavin-dependent monooxygenase peniC then catalyze a series of oxidation reactions to transform silphinene into penifulvin A. The polypeptide is Cytochrome P450 monooxygenase peniB (Penicillium patulum (Penicillium griseofulvum)).